We begin with the raw amino-acid sequence, 216 residues long: UPF0301 protein Nham_3550 (216 aa).

Positions 1-10 (MSAARKRPGT) are enriched in basic residues. The disordered stretch occupies residues 1 to 25 (MSAARKRPGTGRRQTDDADTGAPDQ).

The protein belongs to the UPF0301 (AlgH) family.

The chain is UPF0301 protein Nham_3550 from Nitrobacter hamburgensis (strain DSM 10229 / NCIMB 13809 / X14).